A 289-amino-acid polypeptide reads, in one-letter code: Polyamine aminopropyltransferase (289 aa).

Positions 5–238 constitute a PABS domain; sequence TVWHETLHDQ…GIMTFAWATD (234 aa). Glutamine 33 lines the S-methyl-5'-thioadenosine pocket. 2 residues coordinate spermidine: histidine 64 and aspartate 88. Residues glutamate 108 and 140 to 141 contribute to the S-methyl-5'-thioadenosine site; that span reads DG. Aspartate 158 (proton acceptor) is an active-site residue. 158-161 contacts spermidine; it reads DCTD. Proline 165 contacts S-methyl-5'-thioadenosine.

Belongs to the spermidine/spermine synthase family. As to quaternary structure, homodimer or homotetramer.

Its subcellular location is the cytoplasm. The catalysed reaction is S-adenosyl 3-(methylsulfanyl)propylamine + putrescine = S-methyl-5'-thioadenosine + spermidine + H(+). It functions in the pathway amine and polyamine biosynthesis; spermidine biosynthesis; spermidine from putrescine: step 1/1. In terms of biological role, catalyzes the irreversible transfer of a propylamine group from the amino donor S-adenosylmethioninamine (decarboxy-AdoMet) to putrescine (1,4-diaminobutane) to yield spermidine. This chain is Polyamine aminopropyltransferase, found in Enterobacter sp. (strain 638).